The chain runs to 305 residues: Sulfate adenylyltransferase subunit 2 (305 aa).

The disordered stretch occupies residues 283 to 305; that stretch reads RQGRVIDHDQSASMEKKKQEGYF.

The protein belongs to the PAPS reductase family. CysD subfamily. In terms of assembly, heterodimer composed of CysD, the smaller subunit, and CysN.

It catalyses the reaction sulfate + ATP + H(+) = adenosine 5'-phosphosulfate + diphosphate. It participates in sulfur metabolism; hydrogen sulfide biosynthesis; sulfite from sulfate: step 1/3. In terms of biological role, with CysN forms the ATP sulfurylase (ATPS) that catalyzes the adenylation of sulfate producing adenosine 5'-phosphosulfate (APS) and diphosphate, the first enzymatic step in sulfur assimilation pathway. APS synthesis involves the formation of a high-energy phosphoric-sulfuric acid anhydride bond driven by GTP hydrolysis by CysN coupled to ATP hydrolysis by CysD. The polypeptide is Sulfate adenylyltransferase subunit 2 (Caulobacter sp. (strain K31)).